The following is a 358-amino-acid chain: Probable protein phosphatase 2C 68 (358 aa).

Positions 74–352 constitute a PPM-type phosphatase domain; the sequence is RHGAASVAGR…DNISVVVVDL (279 aa). Residues D117, G118, D298, and D343 each coordinate Mn(2+).

Belongs to the PP2C family. The cofactor is Mg(2+). Requires Mn(2+) as cofactor.

The protein localises to the nucleus. It is found in the cytoplasm. It localises to the cytosol. The enzyme catalyses O-phospho-L-seryl-[protein] + H2O = L-seryl-[protein] + phosphate. It carries out the reaction O-phospho-L-threonyl-[protein] + H2O = L-threonyl-[protein] + phosphate. In terms of biological role, involved in the regulation of abiotic stress responses. Acts as a negative regulator of abscisic acid (ABA) signaling and positive regulator of abiotic stress signaling. May be involved in panicle development. The protein is Probable protein phosphatase 2C 68 of Oryza sativa subsp. japonica (Rice).